We begin with the raw amino-acid sequence, 476 residues long: Glucose-1-phosphate adenylyltransferase (476 aa).

Residues tyrosine 114, glycine 179, 194–195, and serine 212 each bind alpha-D-glucose 1-phosphate; that span reads EK.

The protein belongs to the bacterial/plant glucose-1-phosphate adenylyltransferase family. In terms of assembly, homotetramer.

The catalysed reaction is alpha-D-glucose 1-phosphate + ATP + H(+) = ADP-alpha-D-glucose + diphosphate. It functions in the pathway glycan biosynthesis; glycogen biosynthesis. Its function is as follows. Involved in the biosynthesis of ADP-glucose, a building block required for the elongation reactions to produce glycogen. Catalyzes the reaction between ATP and alpha-D-glucose 1-phosphate (G1P) to produce pyrophosphate and ADP-Glc. The sequence is that of Glucose-1-phosphate adenylyltransferase from Yersinia pestis bv. Antiqua (strain Antiqua).